Here is a 252-residue protein sequence, read N- to C-terminus: MLAKRIIPCLDVDNGRVVKGVQFLDIRDAGDPVEVARRYNEQGADEITFLDITATHHGRDTTYRTVERMAESVFVPLTVGGGVRKVEDIRLLLNAGADKVSINSAAVFNPEFVQEASQRFGAQCIVVAIDAKKTGDNTWEIFTHGGRKPTGIDALEWSVKMAEYGAGELLVTSMDADGTKAGYDIALMREINNRVSIPTIASGGVGNLQHMADGILKGGADAVLAASIFHFGQHTIPEAKQFLAAQGIEMRL.

Active-site residues include Asp-11 and Asp-130.

The protein belongs to the HisA/HisF family. As to quaternary structure, heterodimer of HisH and HisF.

It is found in the cytoplasm. It catalyses the reaction 5-[(5-phospho-1-deoxy-D-ribulos-1-ylimino)methylamino]-1-(5-phospho-beta-D-ribosyl)imidazole-4-carboxamide + L-glutamine = D-erythro-1-(imidazol-4-yl)glycerol 3-phosphate + 5-amino-1-(5-phospho-beta-D-ribosyl)imidazole-4-carboxamide + L-glutamate + H(+). It participates in amino-acid biosynthesis; L-histidine biosynthesis; L-histidine from 5-phospho-alpha-D-ribose 1-diphosphate: step 5/9. Its function is as follows. IGPS catalyzes the conversion of PRFAR and glutamine to IGP, AICAR and glutamate. The HisF subunit catalyzes the cyclization activity that produces IGP and AICAR from PRFAR using the ammonia provided by the HisH subunit. This Acinetobacter baylyi (strain ATCC 33305 / BD413 / ADP1) protein is Imidazole glycerol phosphate synthase subunit HisF.